The primary structure comprises 437 residues: Elongator complex protein 4 (437 aa).

A disordered region spans residues 179-247 (FSKSSSPTTP…TKTGSQDSPL (69 aa)). Residues 181–192 (KSSSPTTPSLEQ) show a composition bias toward polar residues. Serine 183 is modified (phosphoserine). The span at 220-237 (SANNNNNNNNNSSSVTSS) shows a compositional bias: low complexity. Phosphoserine is present on serine 242.

It belongs to the ELP4 family. In terms of assembly, component of the elongator complex composed of Elp1, Elp2, Elp3, Elp4, Elp5 and Elp6. The elongator complex associates with and stabilizes microtubules; efficient interaction requires the full complex.

It localises to the cytoplasm. It is found in the nucleus. Its subcellular location is the cytoskeleton. The protein resides in the spindle. Its pathway is tRNA modification; 5-methoxycarbonylmethyl-2-thiouridine-tRNA biosynthesis. Component of the elongator complex, which is required for multiple tRNA modifications, including mcm5U (5-methoxycarbonylmethyl uridine), mcm5s2U (5-methoxycarbonylmethyl-2-thiouridine), and ncm5U (5-carbamoylmethyl uridine). The elongator complex catalyzes the formation of carboxymethyluridine in the wobble base at position 34 in tRNAs. Binding by the elongator complex stabilizes microtubules and promotes their growth. This induces central spindle asymmetry, promoting polarized signaling endosome trafficking during asymmetric cell division and cell fate assignation of sensory organ precursor cells. This is Elongator complex protein 4 from Drosophila melanogaster (Fruit fly).